Here is a 456-residue protein sequence, read N- to C-terminus: Hydroxymethylglutaryl-CoA synthase ERG13 (456 aa).

Ala35 contacts (3S)-3-hydroxy-3-methylglutaryl-CoA. Glu86 serves as the catalytic Proton donor/acceptor. Cys118, Asn156, Thr160, Ser210, His259, Lys268, Asn336, and Ser370 together coordinate (3S)-3-hydroxy-3-methylglutaryl-CoA. The active-site Acyl-thioester intermediate is the Cys118. His259 serves as the catalytic Proton donor/acceptor.

Belongs to the thiolase-like superfamily. HMG-CoA synthase family.

The enzyme catalyses acetoacetyl-CoA + acetyl-CoA + H2O = (3S)-3-hydroxy-3-methylglutaryl-CoA + CoA + H(+). The protein operates within metabolic intermediate biosynthesis; (R)-mevalonate biosynthesis; (R)-mevalonate from acetyl-CoA: step 2/3. In terms of biological role, hydroxymethylglutaryl-CoA synthase; part of the first module of ergosterol biosynthesis pathway that includes the early steps of the pathway, conserved across all eukaryotes, and which results in the formation of mevalonate from acetyl-coenzyme A (acetyl-CoA). ERG13 condenses acetyl-CoA with acetoacetyl-CoA to form hydroxymethylglutaryl-CoA (HMG-CoA). The first module starts with the action of the cytosolic acetyl-CoA acetyltransferase ERG10B that catalyzes the formation of acetoacetyl-CoA. The hydroxymethylglutaryl-CoA synthases ERG13 then condenses acetyl-CoA with acetoacetyl-CoA to form HMG-CoA. The rate-limiting step of the early module is the reduction to mevalonate by the 3-hydroxy-3-methylglutaryl-coenzyme A (HMG-CoA) reductases HMG1. This is Hydroxymethylglutaryl-CoA synthase ERG13 from Gibberella zeae (strain ATCC MYA-4620 / CBS 123657 / FGSC 9075 / NRRL 31084 / PH-1) (Wheat head blight fungus).